The chain runs to 227 residues: TMF-regulated nuclear protein 1 (227 aa).

Disordered regions lie at residues 1–72 and 200–227; these read MPGC…ELQR and GRLR…SPQR. The segment covering 22-55 has biased composition (pro residues); sequence SPPPPWDPMPSSQPPPPTPTLTPTPTPGQSPPLP.

In terms of assembly, interacts with TMF1; may regulate TRNP1 proteasomal degradation. Post-translationally, ubiquitinated, leading to its degradation by the proteasome.

Its subcellular location is the nucleus. Its function is as follows. DNA-binding factor that regulates the expression of a subset of genes and plays a key role in tangential, radial, and lateral expansion of the brain neocortex. Regulates neural stem cells proliferation and the production of intermediate neural progenitors and basal radial glial cells affecting the process of cerebral cortex gyrification. May control the proliferation rate of cells by regulating their progression through key cell-cycle transition points. The polypeptide is TMF-regulated nuclear protein 1 (TRNP1) (Homo sapiens (Human)).